The following is a 206-amino-acid chain: Thiamine-phosphate synthase (206 aa).

Residues 35 to 39 (QLRHK) and Asn-67 contribute to the 4-amino-2-methyl-5-(diphosphooxymethyl)pyrimidine site. Positions 68 and 87 each coordinate Mg(2+). Position 106 (Ser-106) interacts with 4-amino-2-methyl-5-(diphosphooxymethyl)pyrimidine. 132–134 (TGS) is a binding site for 2-[(2R,5Z)-2-carboxy-4-methylthiazol-5(2H)-ylidene]ethyl phosphate. Residue Lys-135 participates in 4-amino-2-methyl-5-(diphosphooxymethyl)pyrimidine binding. Gly-163 contacts 2-[(2R,5Z)-2-carboxy-4-methylthiazol-5(2H)-ylidene]ethyl phosphate.

The protein belongs to the thiamine-phosphate synthase family. The cofactor is Mg(2+).

The catalysed reaction is 2-[(2R,5Z)-2-carboxy-4-methylthiazol-5(2H)-ylidene]ethyl phosphate + 4-amino-2-methyl-5-(diphosphooxymethyl)pyrimidine + 2 H(+) = thiamine phosphate + CO2 + diphosphate. It carries out the reaction 2-(2-carboxy-4-methylthiazol-5-yl)ethyl phosphate + 4-amino-2-methyl-5-(diphosphooxymethyl)pyrimidine + 2 H(+) = thiamine phosphate + CO2 + diphosphate. It catalyses the reaction 4-methyl-5-(2-phosphooxyethyl)-thiazole + 4-amino-2-methyl-5-(diphosphooxymethyl)pyrimidine + H(+) = thiamine phosphate + diphosphate. It functions in the pathway cofactor biosynthesis; thiamine diphosphate biosynthesis; thiamine phosphate from 4-amino-2-methyl-5-diphosphomethylpyrimidine and 4-methyl-5-(2-phosphoethyl)-thiazole: step 1/1. Condenses 4-methyl-5-(beta-hydroxyethyl)thiazole monophosphate (THZ-P) and 2-methyl-4-amino-5-hydroxymethyl pyrimidine pyrophosphate (HMP-PP) to form thiamine monophosphate (TMP). The chain is Thiamine-phosphate synthase from Chlorobium phaeobacteroides (strain DSM 266 / SMG 266 / 2430).